The sequence spans 20 residues: MLTYTGTVINVQTFAAKPDP.

The polypeptide is Chemoheterotroph-specific protein (Thiomonas delicata (Thiomonas cuprina)).